The primary structure comprises 343 residues: S-adenosylmethionine:tRNA ribosyltransferase-isomerase (343 aa).

It belongs to the QueA family. As to quaternary structure, monomer.

The protein localises to the cytoplasm. The enzyme catalyses 7-aminomethyl-7-carbaguanosine(34) in tRNA + S-adenosyl-L-methionine = epoxyqueuosine(34) in tRNA + adenine + L-methionine + 2 H(+). The protein operates within tRNA modification; tRNA-queuosine biosynthesis. Transfers and isomerizes the ribose moiety from AdoMet to the 7-aminomethyl group of 7-deazaguanine (preQ1-tRNA) to give epoxyqueuosine (oQ-tRNA). This chain is S-adenosylmethionine:tRNA ribosyltransferase-isomerase, found in Geotalea uraniireducens (strain Rf4) (Geobacter uraniireducens).